A 376-amino-acid polypeptide reads, in one-letter code: Enoyl-[acyl-carrier-protein] reductase, mitochondrial (376 aa).

Residue Tyr-72 is the Proton donor of the active site. NADP(+) contacts are provided by residues Asn-154, Thr-182–Val-185, Arg-205–Arg-207, Tyr-280–Met-283, Tyr-305–Ile-307, and Lys-369.

It belongs to the zinc-containing alcohol dehydrogenase family. Quinone oxidoreductase subfamily. As to quaternary structure, homodimer.

The protein resides in the mitochondrion matrix. It carries out the reaction a 2,3-saturated acyl-[ACP] + NADP(+) = a (2E)-enoyl-[ACP] + NADPH + H(+). Catalyzes the NADPH-dependent reduction of trans-2-enoyl thioesters in mitochondrial fatty acid synthesis (fatty acid synthesis type II). Fatty acid chain elongation in mitochondria uses acyl carrier protein (ACP) as an acyl group carrier, but the enzyme accepts both ACP and CoA thioesters as substrates in vitro. Required for respiration and the maintenance of the mitochondrial compartment. This chain is Enoyl-[acyl-carrier-protein] reductase, mitochondrial (ETR1), found in Eremothecium gossypii (strain ATCC 10895 / CBS 109.51 / FGSC 9923 / NRRL Y-1056) (Yeast).